Here is a 470-residue protein sequence, read N- to C-terminus: Uronate isomerase (470 aa).

The protein belongs to the metallo-dependent hydrolases superfamily. Uronate isomerase family.

The enzyme catalyses D-glucuronate = D-fructuronate. The catalysed reaction is aldehydo-D-galacturonate = keto-D-tagaturonate. It functions in the pathway carbohydrate metabolism; pentose and glucuronate interconversion. The protein is Uronate isomerase of Serratia proteamaculans (strain 568).